Reading from the N-terminus, the 393-residue chain is Na(+)/H(+) antiporter NhaA (393 aa).

The next 12 membrane-spanning stretches (helical) occupy residues 23–43 (AGGITLMAAAALALIVANSPF), 58–78 (LSLAHWINDALMAIFFLLVGL), 96–116 (MLPGIAAAGGVILPAIIFAVL), 126–146 (GWAVPSATDIAFALGVLSLLG), 155–175 (VFLATLAILDDLAAVVIIAIF), 178–198 (AEISMPYLGAAFITAAVLFVM), 201–221 (MGVVKLLPYLISAVILWFFVF), 224–244 (GVHATVAGVVAALMIPLKPAP), 265–285 (VAFIVVPIFGFANAGISFKGL), 298–318 (ILLGLFLGKQFGVFGAAWLAI), 334–354 (LYGVAILCGIGFTMSIFIGLL), and 367–387 (IGVLSGSALSAICGYLLLRAA).

It belongs to the NhaA Na(+)/H(+) (TC 2.A.33) antiporter family.

It is found in the cell inner membrane. The enzyme catalyses Na(+)(in) + 2 H(+)(out) = Na(+)(out) + 2 H(+)(in). Its function is as follows. Na(+)/H(+) antiporter that extrudes sodium in exchange for external protons. The chain is Na(+)/H(+) antiporter NhaA from Brucella canis (strain ATCC 23365 / NCTC 10854 / RM-666).